Here is a 768-residue protein sequence, read N- to C-terminus: Degenerin mec-4 (768 aa).

Topologically, residues 1–109 (MSWMQNLKNY…GEAPNVYYRA (109 aa)) are cytoplasmic. The helical transmembrane segment at 110–130 (VWVMLFLGCMIMLYLNAQSVL) threads the bilayer. Residues 131 to 718 (DKYNRNEKIV…VNLLADFGGQ (588 aa)) are Extracellular-facing. 2 disordered regions span residues 187-221 (AGGNKEHDGEKEVITEAPTTPAPTTKPSRRRGKRD) and 237-260 (GSQGSSEQEDKDDEKEEEMHETTT). Over residues 189–200 (GNKEHDGEKEVI) the composition is skewed to basic and acidic residues. Over residues 203-212 (APTTPAPTTK) the composition is skewed to low complexity. Residues 243-252 (EQEDKDDEKE) show a composition bias toward acidic residues. N-linked (GlcNAc...) asparagine glycans are attached at residues Asn336, Asn357, Asn480, Asn484, Asn503, and Asn671. Residues 719 to 739 (LGLWCGISFLTCCEFVFLFLE) form a helical membrane-spanning segment. The Cytoplasmic portion of the chain corresponds to 740–768 (TAYMSAEHNYSLYKKKKAEKAKKVASGSF).

The protein belongs to the amiloride-sensitive sodium channel (TC 1.A.6) family. In terms of assembly, the channel is probably composed of at least the mec-2, mec-4, mec-6 and mec-10 subunits.

The protein resides in the membrane. In terms of biological role, probable sodium channel subunit. May be needed for mechanosensory transduction (touch sensitivity). Negatively regulates the turning step of male mating behavior. The protein is Degenerin mec-4 (mec-4) of Caenorhabditis briggsae.